Reading from the N-terminus, the 82-residue chain is uncharacterized protein (82 aa).

A signal peptide spans 1 to 19 (MKNLLKILLIIAFANPVFA).

This is an uncharacterized protein from Rickettsia prowazekii (strain Madrid E).